A 187-amino-acid polypeptide reads, in one-letter code: MATTNDIKNGTVLKLEGQLWNIIEFQHVKPGKGGAFVRTKMRNVMSGKVVDKTFNAGLKIETATVDRRDYQYLYQDGEDFVFMDTQDYDQITVSGATVGDATNFMLENQMVNIAIHEGTPLYIELPPSVVLEITYTEPGLQGDRSSAGTKPATVETGYEIQVPLFVEQGTKVKVDTRDGSYLGRVND.

The protein belongs to the elongation factor P family.

The protein resides in the cytoplasm. Its pathway is protein biosynthesis; polypeptide chain elongation. In terms of biological role, involved in peptide bond synthesis. Stimulates efficient translation and peptide-bond synthesis on native or reconstituted 70S ribosomes in vitro. Probably functions indirectly by altering the affinity of the ribosome for aminoacyl-tRNA, thus increasing their reactivity as acceptors for peptidyl transferase. This is Elongation factor P from Paenarthrobacter aurescens (strain TC1).